The primary structure comprises 574 residues: Craniofacial development protein 2 (574 aa).

5 stretches are compositionally biased toward basic and acidic residues: residues 1-16, 23-37, 45-55, 86-111, and 134-172; these read MEEVDSKDISSSKAED, ECHEEAVDELMKEDE, EQTKGIKRKAE, SEKEDAATEQEKGVESEDARKKKEDE, and TGEETEETRSGEEQEKPKEMQEVKLTKSLVEEVRCDRQQ. 2 disordered regions span residues 1-222 and 488-574; these read MEEV…PAVD and TRPF…SGVF. Residues 199–208 are compositionally biased toward polar residues; sequence KTGTNASSKN. Residues 493-572 form a hydrophilic region; sequence GTNEADDTSE…AVPSLPAGSG (80 aa). A compositionally biased stretch (basic and acidic residues) spans 502–516; the sequence is EESKPSSEQKGKEKP. The span at 518–528 shows a compositional bias: low complexity; it reads ASVPSAVSSVP.

The protein resides in the cytoplasm. Its subcellular location is the nucleus. The protein is Craniofacial development protein 2 (CFDP2) of Tragulus javanicus (Lesser Malay chevrotain).